The following is a 55-amino-acid chain: uncharacterized protein (55 aa).

Residues 1 to 22 are disordered; sequence MPALKSHVRPNSAAPARRQPWP.

This is an uncharacterized protein from Rhodobacter capsulatus (Rhodopseudomonas capsulata).